Reading from the N-terminus, the 224-residue chain is 7-cyano-7-deazaguanine synthase (224 aa).

Residue 10-20 (LSGGLDSATVV) participates in ATP binding. Zn(2+) contacts are provided by C189, C199, C202, and C205.

This sequence belongs to the QueC family. Zn(2+) serves as cofactor.

The enzyme catalyses 7-carboxy-7-deazaguanine + NH4(+) + ATP = 7-cyano-7-deazaguanine + ADP + phosphate + H2O + H(+). It functions in the pathway purine metabolism; 7-cyano-7-deazaguanine biosynthesis. Functionally, catalyzes the ATP-dependent conversion of 7-carboxy-7-deazaguanine (CDG) to 7-cyano-7-deazaguanine (preQ(0)). The polypeptide is 7-cyano-7-deazaguanine synthase (Stutzerimonas stutzeri (strain A1501) (Pseudomonas stutzeri)).